Here is a 581-residue protein sequence, read N- to C-terminus: Pyridine nucleotide-disulfide oxidoreductase domain-containing protein 2 (581 aa).

Residue 38–71 (VVIGAGHNGLVAAAYLQRLGVNTAVFERRHVIGG) coordinates FAD.

The protein belongs to the carotenoid/retinoid oxidoreductase family. Interacts with COX5B; this interaction may contribute to localize PYROXD2 to the inner face of the inner mitochondrial membrane.

Its subcellular location is the mitochondrion matrix. Its function is as follows. Probable oxidoreductase that may play a role as regulator of mitochondrial function. The protein is Pyridine nucleotide-disulfide oxidoreductase domain-containing protein 2 of Rattus norvegicus (Rat).